The following is a 204-amino-acid chain: Ras-related protein RabQ (204 aa).

A GTP-binding site is contributed by 12 to 19 (GPPFVGKS). Positions 34 to 42 (MDTTIGVEF) match the Effector region motif. Residues 60 to 64 (DTAGQ) and 118 to 121 (NKCD) each bind GTP. Residues Cys-202 and Cys-203 are each lipidated (S-geranylgeranyl cysteine).

Belongs to the small GTPase superfamily. Rab family.

It is found in the cell membrane. The protein is Ras-related protein RabQ (rabQ) of Dictyostelium discoideum (Social amoeba).